Here is a 142-residue protein sequence, read N- to C-terminus: Ribosomal RNA large subunit methyltransferase H (142 aa).

Gly-89 is a binding site for S-adenosyl-L-methionine.

Belongs to the RNA methyltransferase RlmH family. In terms of assembly, homodimer.

The protein resides in the cytoplasm. It catalyses the reaction pseudouridine(1915) in 23S rRNA + S-adenosyl-L-methionine = N(3)-methylpseudouridine(1915) in 23S rRNA + S-adenosyl-L-homocysteine + H(+). Functionally, specifically methylates the pseudouridine at position 1915 (m3Psi1915) in 23S rRNA. In Zymomonas mobilis subsp. mobilis (strain ATCC 31821 / ZM4 / CP4), this protein is Ribosomal RNA large subunit methyltransferase H.